We begin with the raw amino-acid sequence, 373 residues long: Coiled-coil domain-containing protein 34 (373 aa).

Disordered stretches follow at residues 1–112 and 118–137; these read MWAA…SLRG and CASTQVESENNQEEQKQVRL. Ser-52 carries the phosphoserine modification. The segment covering 61–76 has biased composition (polar residues); sequence NSTRSLLSPLGHQSFQ. Over residues 77-101 the composition is skewed to acidic residues; sequence FDEDDGDGEDEEDVDDEEDVDEDAH. Positions 152–286 form a coiled coil; it reads KEKEERDRLQ…QEWLENAKHK (135 aa). The disordered stretch occupies residues 324 to 352; that stretch reads IHMPPPKEAKDLSGRKSKRPVISQPHKSS. The span at 328–337 shows a compositional bias: basic and acidic residues; sequence PPKEAKDLSG.

As to expression, expressed in sperm.

Its subcellular location is the cell projection. The protein resides in the cilium. The protein localises to the flagellum. Its function is as follows. Involved in spermatogenesis. Has a probable role in anterograde intraflagellar transport which is essential for the formation of sperm flagella. In Homo sapiens (Human), this protein is Coiled-coil domain-containing protein 34 (CCDC34).